The sequence spans 183 residues: Microfibrillar-associated protein 2 (183 aa).

Positions 1-17 (MRAAYLFLLFLPAGLLA) form a signal peptide, or 19. Position 18 is a pyrrolidone carboxylic acid (Q18). Sulfotyrosine occurs at positions 47, 48, and 50. Residues 58-94 (SEEQFQFQSQQQVQQEVIPAPTPEPGNAELEPTEPGP) form a disordered region. A compositionally biased stretch (low complexity) spans 60–74 (EQFQFQSQQQVQQEV). Positions 153-183 (CRDKFSKCGVMASSGLCQSVAASCARSCGSC) constitute a ShKT domain. Disulfide bonds link C153–C183, C160–C176, and C169–C180.

Belongs to the MFAP family. In terms of assembly, forms a ternary complex with BGN and ELN. Interacts with FBN1 (via N-terminal domain) and FBN2. Post-translationally, forms intermolecular disulfide bonds either with other MAGP-1 molecules or with other components of the microfibrils. May form transglutaminase cross-links. O-glycosylated.

Its subcellular location is the secreted. It is found in the extracellular space. The protein resides in the extracellular matrix. In terms of biological role, component of the elastin-associated microfibrils. In Homo sapiens (Human), this protein is Microfibrillar-associated protein 2 (MFAP2).